Reading from the N-terminus, the 459-residue chain is Cysteine--tRNA ligase (459 aa).

Cys28 contacts Zn(2+). Positions 30-40 match the 'HIGH' region motif; it reads VTIYDLCHIGH. Residues Cys209, His234, and Glu238 each contribute to the Zn(2+) site. The 'KMSKS' region motif lies at 266-270; sequence KMSKS. Position 269 (Lys269) interacts with ATP.

This sequence belongs to the class-I aminoacyl-tRNA synthetase family. Monomer. It depends on Zn(2+) as a cofactor.

The protein localises to the cytoplasm. It carries out the reaction tRNA(Cys) + L-cysteine + ATP = L-cysteinyl-tRNA(Cys) + AMP + diphosphate. The protein is Cysteine--tRNA ligase of Shewanella pealeana (strain ATCC 700345 / ANG-SQ1).